A 179-amino-acid chain; its full sequence is MDTKSLLVTGYRHTDLGIFSEKDPRLHIIKSAIRRNFIRFLEEGVSWFILTGQLGFEYWSLEVLEDLRAEGYQLSIATIFPFENHGEQWNEANQAKLARFKQVDFVKYAYPRYENPGQFRDYNQFLLDNTTGCYLFYDSENETNLKYLYHMVLKKEGYNRKTLTFEELNEEAENFSNSE.

This sequence belongs to the UPF0398 family.

This Streptococcus suis (strain 05ZYH33) protein is UPF0398 protein SSU05_0416.